A 710-amino-acid chain; its full sequence is Exocyst complex component 5 (710 aa).

A coiled-coil region spans residues 44–96; that stretch reads DTFIQTIKDLKILQEKQQSKCERLEESLRQEKESHAKKIAKLQERHQTAIDVF.

It belongs to the SEC10 family. In terms of assembly, the exocyst complex is composed of Sec3/Exoc1, Sec5/Exoc2, Sec6/Exoc3, Sec8/Exoc4, Sec10/Exoc5, Sec15/Exoc6, Exo70/Exoc7 and Exo84/Exoc8.

In terms of biological role, component of the exocyst complex involved in the docking of exocytic vesicles with fusion sites on the plasma membrane. The protein is Exocyst complex component 5 of Drosophila melanogaster (Fruit fly).